The sequence spans 305 residues: GTP cyclohydrolase FolE2 (305 aa).

The protein belongs to the GTP cyclohydrolase IV family.

It carries out the reaction GTP + H2O = 7,8-dihydroneopterin 3'-triphosphate + formate + H(+). It functions in the pathway cofactor biosynthesis; 7,8-dihydroneopterin triphosphate biosynthesis; 7,8-dihydroneopterin triphosphate from GTP: step 1/1. Converts GTP to 7,8-dihydroneopterin triphosphate. The protein is GTP cyclohydrolase FolE2 of Xanthomonas axonopodis pv. citri (strain 306).